Reading from the N-terminus, the 1094-residue chain is Formin-like protein 1 (1094 aa).

3 disordered regions span residues methionine 1–methionine 29, serine 173–serine 199, and alanine 507–alanine 627. Glycine 2 carries N-myristoyl glycine lipidation. Serine 7 is subject to Phosphoserine. The span at alanine 16–proline 28 shows a compositional bias: pro residues. The 438-residue stretch at glutamine 27 to valine 464 folds into the GBD/FH3 domain. Residue serine 184 is modified to Phosphoserine. The segment covering arginine 519–glutamate 529 has biased composition (polar residues). Composition is skewed to pro residues over residues alanine 535–proline 549 and proline 559–proline 610. The FH2 domain occupies alanine 627–threonine 1018. The residue at position 688 (serine 688) is a Phosphoserine. Positions tryptophan 1002–proline 1017 are enriched in basic and acidic residues. A disordered region spans residues tryptophan 1002–leucine 1094. Serine 1021 is subject to Phosphoserine. The DAD domain maps to serine 1049–proline 1082.

This sequence belongs to the formin homology family. In terms of assembly, interacts with RAC1, PFN1 and PFN2. Interacts (activated by RAC1) with SRGAP2 (via SH3 domain); regulates the actin filament severing activity of FMNL1. In terms of processing, myristoylation mediates membrane localization. Highly expressed in the spleen, lymph node and bone marrow cells.

The protein resides in the cytoplasm. It is found in the cell membrane. Its subcellular location is the cytoplasmic vesicle. It localises to the phagosome. In terms of biological role, plays a role in the regulation of cell morphology and cytoskeletal organization. Required in the cortical actin filament dynamics and cell shape. May play a role in the control of cell motility and survival of macrophages. The protein is Formin-like protein 1 (Fmnl1) of Mus musculus (Mouse).